The primary structure comprises 510 residues: Lysine--tRNA ligase (510 aa).

Mg(2+) contacts are provided by Glu-420 and Glu-427.

It belongs to the class-II aminoacyl-tRNA synthetase family. As to quaternary structure, homodimer. Mg(2+) serves as cofactor.

It localises to the cytoplasm. It carries out the reaction tRNA(Lys) + L-lysine + ATP = L-lysyl-tRNA(Lys) + AMP + diphosphate. The protein is Lysine--tRNA ligase of Vibrio campbellii (strain ATCC BAA-1116).